The sequence spans 65 residues: Large ribosomal subunit protein bL35 (65 aa).

The interval 1-22 (MPKIKTVRGAAKRFKKTGKGGF) is disordered. Residues 10 to 22 (AAKRFKKTGKGGF) show a composition bias toward basic residues.

This sequence belongs to the bacterial ribosomal protein bL35 family.

In Escherichia coli O127:H6 (strain E2348/69 / EPEC), this protein is Large ribosomal subunit protein bL35.